We begin with the raw amino-acid sequence, 755 residues long: Photosystem I P700 chlorophyll a apoprotein A1 (755 aa).

The next 8 membrane-spanning stretches (helical) occupy residues 72–95, 158–181, 197–221, 297–315, 352–375, 391–417, 439–461, and 536–554; these read IFSA…YHGA, LLCT…FHYH, LNHH…HVAI, QAHH…GHMY, WHAQ…QHMY, ISLF…IYMV, AIIS…FYVH, and FMVH…LILL. 2 residues coordinate [4Fe-4S] cluster: Cys-578 and Cys-587. Helical transmembrane passes span 594 to 615 and 669 to 691; these read HVFL…HFSW and LSAY…MFLF. Residue His-680 coordinates chlorophyll a'. Residues Met-688 and Tyr-696 each contribute to the chlorophyll a site. Trp-697 contributes to the phylloquinone binding site. Residues 729–749 form a helical membrane-spanning segment; it reads AVGVAHYLLGGIVTTWAFFLA.

Belongs to the PsaA/PsaB family. The PsaA/B heterodimer binds the P700 chlorophyll special pair and subsequent electron acceptors. PSI consists of a core antenna complex that captures photons, and an electron transfer chain that converts photonic excitation into a charge separation. The cyanobacterial PSI reaction center is composed of one copy each of PsaA,B,C,D,E,F,I,J,K,L,M and X, and forms trimeric complexes. PSI electron transfer chain: 5 chlorophyll a, 1 chlorophyll a', 2 phylloquinones and 3 4Fe-4S clusters. PSI core antenna: 90 chlorophyll a, 22 carotenoids, 3 phospholipids and 1 galactolipid. P700 is a chlorophyll a/chlorophyll a' dimer, A0 is one or more chlorophyll a, A1 is one or both phylloquinones and FX is a shared 4Fe-4S iron-sulfur center. serves as cofactor.

It localises to the cellular thylakoid membrane. It catalyses the reaction reduced [plastocyanin] + hnu + oxidized [2Fe-2S]-[ferredoxin] = oxidized [plastocyanin] + reduced [2Fe-2S]-[ferredoxin]. PsaA and PsaB bind P700, the primary electron donor of photosystem I (PSI), as well as the electron acceptors A0, A1 and FX. PSI is a plastocyanin/cytochrome c6-ferredoxin oxidoreductase, converting photonic excitation into a charge separation, which transfers an electron from the donor P700 chlorophyll pair to the spectroscopically characterized acceptors A0, A1, FX, FA and FB in turn. Oxidized P700 is reduced on the lumenal side of the thylakoid membrane by plastocyanin or cytochrome c6. The polypeptide is Photosystem I P700 chlorophyll a apoprotein A1 (Synechococcus sp. (strain JA-3-3Ab) (Cyanobacteria bacterium Yellowstone A-Prime)).